A 437-amino-acid polypeptide reads, in one-letter code: Protein disulfide-isomerase tmx3a (437 aa).

Residues Met1–Gly21 form the signal peptide. The region spanning Tyr22–Gly126 is the Thioredoxin domain. At Tyr22–Thr368 the chain is on the extracellular side. Active-site nucleophile residues include Cys48 and Cys51. A disulfide bond links Cys48 and Cys51. N-linked (GlcNAc...) asparagine glycosylation is present at Asn308. The helical transmembrane segment at Ala369 to Tyr389 threads the bilayer. Residues Ala390–Asp437 are Cytoplasmic-facing. Residues Asp398 to Asp437 form a disordered region. Basic and acidic residues predominate over residues Thr414–Asp437. The Di-lysine motif motif lies at Lys434–Asp437.

The protein localises to the endoplasmic reticulum membrane. The enzyme catalyses Catalyzes the rearrangement of -S-S- bonds in proteins.. Probable disulfide isomerase, which participates in the folding of proteins containing disulfide bonds. May act as a dithiol oxidase. Acts as a regulator of endoplasmic reticulum-mitochondria contact sites via its ability to regulate redox signals. The chain is Protein disulfide-isomerase tmx3a (tmx3a) from Danio rerio (Zebrafish).